The chain runs to 168 residues: Phosphopantetheine adenylyltransferase (168 aa).

Thr-10 serves as a coordination point for substrate. ATP contacts are provided by residues 10 to 11 (TF) and His-18. Lys-42, Leu-74, and Arg-88 together coordinate substrate. Residues 89-91 (GLR), Glu-99, and 124-130 (NSFISST) contribute to the ATP site.

The protein belongs to the bacterial CoaD family. Homohexamer. It depends on Mg(2+) as a cofactor.

Its subcellular location is the cytoplasm. It catalyses the reaction (R)-4'-phosphopantetheine + ATP + H(+) = 3'-dephospho-CoA + diphosphate. It participates in cofactor biosynthesis; coenzyme A biosynthesis; CoA from (R)-pantothenate: step 4/5. Its function is as follows. Reversibly transfers an adenylyl group from ATP to 4'-phosphopantetheine, yielding dephospho-CoA (dPCoA) and pyrophosphate. The protein is Phosphopantetheine adenylyltransferase of Shewanella denitrificans (strain OS217 / ATCC BAA-1090 / DSM 15013).